Reading from the N-terminus, the 400-residue chain is Spaetzle-processing enzyme (400 aa).

The N-terminal stretch at 1–27 (MASTERNFLLLSLVVSALSGLVHRSDA) is a signal peptide. The region spanning 34 to 94 (SCTPQQSDER…GLVNRILVCC (61 aa)) is the Clip domain. 6 cysteine pairs are disulfide-bonded: cysteine 35-cysteine 93, cysteine 46-cysteine 77, cysteine 52-cysteine 94, cysteine 127-cysteine 269, cysteine 166-cysteine 182, and cysteine 211-cysteine 221. Positions 135–399 (IFGGTNTTLW…FIDWIKQKLE (265 aa)) constitute a Peptidase S1 domain. Asparagine 140 carries N-linked (GlcNAc...) asparagine glycosylation. The Charge relay system role is filled by histidine 181. 4 residues coordinate Ca(2+): glutamate 202, aspartate 204, threonine 207, and aspartate 210. Catalysis depends on aspartate 249, which acts as the Charge relay system. Residue asparagine 311 is glycosylated (N-linked (GlcNAc...) asparagine). 2 disulfides stabilise this stretch: cysteine 315-cysteine 332 and cysteine 342-cysteine 375. The active-site Charge relay system is the serine 346.

Belongs to the peptidase S1 family. CLIP subfamily. In terms of assembly, in the active form, heterodimer of a light chain and a heavy chain; disulfide-linked. Post-translationally, proteolytically cleaved in response to Gram-negative bacterial or fungal infection; processing is likely to result in its activation. Cleavage produces a light chain containing the CLIP domain and a catalytic heavy chain which remain covalently associated through an interchain disulfide bond.

It is found in the secreted. In terms of biological role, endopeptidase which plays a key role in innate immunity by cleaving Tl ligand spz and thereby activating the Toll pathway in response to fungal and Gram-positive bacterial infections. Acts downstream of pathogen recognition receptors PGRP-SA and GNBP1 and protease grass in response to Gram-positive bacterial infection. Acts downstream of protease psh in response to fungal infection. This Drosophila melanogaster (Fruit fly) protein is Spaetzle-processing enzyme.